The sequence spans 506 residues: Nucleosome assembly protein 1-like 3 (506 aa).

Disordered regions lie at residues 1–95 (MAEA…LGTN) and 157–307 (PTEE…KRED). The segment covering 35-70 (SSSSSSSTSDSSSSSSTSGSSSGSGSSSSSSGSTSS) has biased composition (low complexity). Acidic residues predominate over residues 157–178 (PTEEECEWNSEDEEFSSDEEVQ). A compositionally biased stretch (basic and acidic residues) spans 196–296 (PKENPEVKAE…ERLQDSVDLK (101 aa)).

It belongs to the nucleosome assembly protein (NAP) family.

Its subcellular location is the nucleus. This chain is Nucleosome assembly protein 1-like 3 (NAP1L3), found in Homo sapiens (Human).